The sequence spans 217 residues: MTGKITTLLFDLDGTLINTNELIIKTFQVTFQEFMPDRVFTREDILPFIGPSLMETFREINPAHADEMRAFYREYNLKHHDDLILEYDGVYEAIRALYEEDYKLGIVSTKMYDTIMRGLKVTGLDKFFQVVIGLDQVSNAKPDPEGIEMALSLLNATKEEAIMIGDNYHDIEAGKNAETLTAGVAWAIKGPEHLAQFQPDFMLEKMSDLLAIVRDEE.

Residue Asp-11 is the Nucleophile of the active site.

It belongs to the HAD-like hydrolase superfamily. PpaX family. Mg(2+) is required as a cofactor.

The enzyme catalyses diphosphate + H2O = 2 phosphate + H(+). Its function is as follows. Hydrolyzes pyrophosphate formed during P-Ser-HPr dephosphorylation by HPrK/P. Might play a role in controlling the intracellular pyrophosphate pool. This is Pyrophosphatase PpaX from Listeria monocytogenes serotype 4b (strain CLIP80459).